The chain runs to 354 residues: Uroporphyrinogen decarboxylase (354 aa).

Substrate contacts are provided by residues 27-31 (RQAGR), Asp-77, Tyr-154, Thr-209, and His-327.

It belongs to the uroporphyrinogen decarboxylase family. In terms of assembly, homodimer.

Its subcellular location is the cytoplasm. The catalysed reaction is uroporphyrinogen III + 4 H(+) = coproporphyrinogen III + 4 CO2. It functions in the pathway porphyrin-containing compound metabolism; protoporphyrin-IX biosynthesis; coproporphyrinogen-III from 5-aminolevulinate: step 4/4. In terms of biological role, catalyzes the decarboxylation of four acetate groups of uroporphyrinogen-III to yield coproporphyrinogen-III. The polypeptide is Uroporphyrinogen decarboxylase (Pectobacterium carotovorum subsp. carotovorum (strain PC1)).